The sequence spans 210 residues: MARYNGPLRVGIGGPVGSGKTALMDLLCKELRERYQIAAITNDIYTKWDAEFLVRSGSLTPDRIVGVETGGCPHTAIREDASMNLAAVADMRAKFPDLDLVLIESGGDNLAATFSPELADLTIYVIDVAAGDKIPSKGGPGITRSDLLVINKIDLAPYVGASLAKMEVDAKRMRGERPFVMTNLKQSAGLDRIIAFLEAKGGLQAEPVDA.

14 to 21 (GPVGSGKT) contacts GTP.

The protein belongs to the SIMIBI class G3E GTPase family. UreG subfamily. As to quaternary structure, homodimer. UreD, UreF and UreG form a complex that acts as a GTP-hydrolysis-dependent molecular chaperone, activating the urease apoprotein by helping to assemble the nickel containing metallocenter of UreC. The UreE protein probably delivers the nickel.

It localises to the cytoplasm. Functionally, facilitates the functional incorporation of the urease nickel metallocenter. This process requires GTP hydrolysis, probably effectuated by UreG. The sequence is that of Urease accessory protein UreG from Rhodopseudomonas palustris (strain BisA53).